The following is a 340-amino-acid chain: S-adenosylmethionine:tRNA ribosyltransferase-isomerase (340 aa).

This sequence belongs to the QueA family. Monomer.

The protein localises to the cytoplasm. The catalysed reaction is 7-aminomethyl-7-carbaguanosine(34) in tRNA + S-adenosyl-L-methionine = epoxyqueuosine(34) in tRNA + adenine + L-methionine + 2 H(+). It participates in tRNA modification; tRNA-queuosine biosynthesis. Functionally, transfers and isomerizes the ribose moiety from AdoMet to the 7-aminomethyl group of 7-deazaguanine (preQ1-tRNA) to give epoxyqueuosine (oQ-tRNA). This chain is S-adenosylmethionine:tRNA ribosyltransferase-isomerase, found in Vesicomyosocius okutanii subsp. Calyptogena okutanii (strain HA).